A 148-amino-acid polypeptide reads, in one-letter code: UPF0260 protein YPK_2117 (148 aa).

Belongs to the UPF0260 family.

This is UPF0260 protein YPK_2117 from Yersinia pseudotuberculosis serotype O:3 (strain YPIII).